An 826-amino-acid chain; its full sequence is (2S)-3-sulfopropanediol dehydratase (826 aa).

The region spanning 33 to 695 is the PFL domain; the sequence is PRVNRLRQAF…NTNASIDGRK (663 aa). Residue Cys464 is the Cysteine radical intermediate of the active site. The active-site Proton acceptor is the Glu466. The region spanning 706 to 826 is the Glycine radical domain; the sequence is PVHTDGGSHD…DLIQRTELHF (121 aa). At Gly802 the chain carries Glycine radical.

Belongs to the glycyl radical enzyme (GRE) family. In terms of processing, requires the activating protein HpfH to generate the key active site glycyl radical on Gly-802 that is involved in catalysis.

It carries out the reaction (2S)-3-sulfopropanediol = 3-oxopropane-1-sulfonate + H2O. It participates in organosulfur degradation; alkanesulfonate degradation. In terms of biological role, involved in the degradation of the organosulfur compound 2(S)-dihydroxypropanesulfonate (DHPS). Catalyzes the radical-mediated dehydration of DHPS to produce 3-sulfopropionaldehyde (3-oxopropane-1-sulfonate). The polypeptide is (2S)-3-sulfopropanediol dehydratase (Klebsiella oxytoca).